A 382-amino-acid chain; its full sequence is Pyrimidine monooxygenase RutA (382 aa).

FMN-binding positions include 68 to 69 (IK), N134, E143, 159 to 160 (RY), and S209.

The protein belongs to the NtaA/SnaA/DszA monooxygenase family. RutA subfamily.

It catalyses the reaction uracil + FMNH2 + NADH + O2 = (Z)-3-ureidoacrylate + FMN + NAD(+) + H2O + H(+). It carries out the reaction thymine + FMNH2 + NADH + O2 = (Z)-2-methylureidoacrylate + FMN + NAD(+) + H2O + H(+). In terms of biological role, catalyzes the pyrimidine ring opening between N-3 and C-4 by an unusual flavin hydroperoxide-catalyzed mechanism, adding oxygen atoms in the process to yield ureidoacrylate peracid, that immediately reacts with FMN forming ureidoacrylate and FMN-N(5)-oxide. The FMN-N(5)-oxide reacts spontaneously with NADH to produce FMN. Requires the flavin reductase RutF to regenerate FMN in vivo. This chain is Pyrimidine monooxygenase RutA, found in Escherichia coli O8 (strain IAI1).